The sequence spans 372 residues: Alpha-parvin (372 aa).

The span at 1–11 (MATSPQKSPSV) shows a compositional bias: low complexity. Positions 1 to 45 (MATSPQKSPSVPKSPTPKSPPSRKKDDSFLGKLGGTLARRKKAKE) are disordered. Alanine 2 bears the N-acetylalanine mark. A phosphoserine mark is found at serine 8, serine 14, and serine 19. An interaction with ARHGAP31 region spans residues 21–25 (PSRKK). A phosphoserine mark is found at serine 28 and serine 62. Calponin-homology (CH) domains follow at residues 95–202 (QELM…QYFR) and 262–369 (NVVK…TKYR). The tract at residues 223–372 (GILQSRQIQE…NLFTKYRNVE (150 aa)) is required for interaction with TESK1 and ILK.

The protein belongs to the parvin family. In terms of assembly, component of the heterotrimeric IPP (ILK-PINCH-PARVIN) complex composed of ILK, LIMS1/PINCH and PARVA; the complex binds to F-actin via the C-terminal tail of LIMS1 and the N-terminal region of PARVA, promoting F-actin filament bundling. Formation of the IPP complex is dependent on protein kinase C and precedes integrin-mediated cell adhesion and spreading. Interacts with TGFB1I1. Interacts with ARHGAP31. Interacts with the actin cytoskeleton. Interacts (via C-terminus) with TESK1 (via C-terminus); the interaction inhibits TESK1 kinase activity. Interacts with PXN/PAXILLIN (via LD motif 4). In terms of tissue distribution, widely expressed, with highest levels in heart, skeletal muscle, kidney and liver.

The protein localises to the cell junction. Its subcellular location is the focal adhesion. It localises to the cell membrane. It is found in the cytoplasm. The protein resides in the cytoskeleton. The protein localises to the myofibril. Its subcellular location is the sarcomere. It localises to the z line. Plays a role in sarcomere organization and in smooth muscle cell contraction. Required for normal development of the embryonic cardiovascular system, and for normal septation of the heart outflow tract. Plays a role in sprouting angiogenesis and is required for normal adhesion of vascular smooth muscle cells to endothelial cells during blood vessel development. Plays a role in the reorganization of the actin cytoskeleton, formation of lamellipodia and ciliogenesis. Plays a role in the establishment of cell polarity, cell adhesion, cell spreading, and directed cell migration. Within the IPP (ILK-PINCH-PARVIN) complex, binds to F-actin, promoting F-actin bundling, a process required to generate force for actin cytoskeleton reorganization and subsequent dynamic cell adhesion events such as cell spreading and migration. In Homo sapiens (Human), this protein is Alpha-parvin (PARVA).